The following is a 220-amino-acid chain: MEDEKNENLMTFIQFCATFITITLFIMPLKTIRLIIEKKNVGTVAGLQFISSVLNCFLWISYALLTSNTTMLFVNSIGMMFSIYYVFNYWKNINQVRASRDYLKKVMIACVLAITIISISYYNTVDDLDTRISRLGFLSSVVCVLMFASPLEKMAIVIQSKNSEGMIINVAILSLLCGLSWTIFGLLLNDIYIYLPNILASILSFVQLTLIKLYPPQILL.

The next 7 membrane-spanning stretches (helical) occupy residues 9–29 (LMTF…IMPL), 44–64 (VAGL…SYAL), 70–90 (TMLF…FNYW), 106–126 (VMIA…NTVD), 138–158 (LSSV…AIVI), 167–187 (IINV…FGLL), and 191–211 (IYIY…LTLI). Residues 12-92 (FIQFCATFIT…IYYVFNYWKN (81 aa)) enclose the MtN3/slv 1 domain. Positions 134–217 (RLGFLSSVVC…LTLIKLYPPQ (84 aa)) constitute a MtN3/slv 2 domain.

Belongs to the SWEET sugar transporter family.

It localises to the golgi apparatus membrane. Its subcellular location is the cell membrane. Mediates both low-affinity uptake and efflux of sugar across the membrane. The sequence is that of Sugar transporter SWEET1 (slc50a1) from Dictyostelium discoideum (Social amoeba).